The sequence spans 177 residues: Large ribosomal subunit protein uL6 (177 aa).

The protein belongs to the universal ribosomal protein uL6 family. Part of the 50S ribosomal subunit.

In terms of biological role, this protein binds to the 23S rRNA, and is important in its secondary structure. It is located near the subunit interface in the base of the L7/L12 stalk, and near the tRNA binding site of the peptidyltransferase center. This chain is Large ribosomal subunit protein uL6, found in Bradyrhizobium sp. (strain BTAi1 / ATCC BAA-1182).